Consider the following 1763-residue polypeptide: Collagen alpha-2(IV) chain (1763 aa).

The signal sequence occupies residues 1–26 (MSSRLRIPLWLLLPTTALVYFVTTVS). The 7S domain stretch occupies residues 27–42 (TQITCRDCTNRGCFCV). The triple-helical region stretch occupies residues 43 to 1529 (GEKGSMGIPG…SGPPGPPGPS (1487 aa)). 2 disordered regions span residues 51 to 529 (PGPQ…PGPK) and 550 to 1529 (AGYA…PGPS). The span at 72–81 (PGPKGQKGSQ) shows a compositional bias: low complexity. N126 carries N-linked (GlcNAc...) asparagine glycosylation. Pro residues predominate over residues 135–152 (PGLPGPPGMPGFPGPPGV). Residues 190 to 199 (FPGEKGDRGD) show a composition bias toward basic and acidic residues. Residues 206–217 (RGPPGEAGPPGN) are compositionally biased toward pro residues. The segment covering 225–235 (PKGDPGEQGPR) has biased composition (low complexity). The O-linked (Xyl...) (glycosaminoglycan) serine glycan is linked to A249. The segment covering 326–335 (DGLPGVPGLP) has biased composition (low complexity). Over residues 400 to 409 (GLPGGPGLPG) the composition is skewed to gly residues. Low complexity-rich tracts occupy residues 410–419 (LPGLEGLPGP) and 428–453 (IPGAPGVQGPPGLAGPPGAKGEPGPR). Residues 466-481 (KDGRPGLDGLPGRKGE) are compositionally biased toward basic and acidic residues. Positions 564–582 (LPGIPGATGAPGDDGLPGA) are enriched in low complexity. Residues 583 to 592 (PGRPGPPGPP) are compositionally biased toward pro residues. Composition is skewed to low complexity over residues 699–714 (DAGLPGLPGLPGAVGP) and 731–783 (KDGL…PGIP). The span at 810-832 (PGLPGPKGEPGPSTTGPPGPPGF) shows a compositional bias: pro residues. Low complexity-rich tracts occupy residues 865 to 895 (EIGLPGLAGAPGFPGAKGEPGLPGLPGKEGP), 946 to 977 (FPGQKGQPGFPGVAGAKGEAGLPGLPGAPGQK), 1040 to 1051 (PGLPGQPGLRGP), 1077 to 1086 (LMGEKGLPGL), 1108 to 1146 (PGLKGEAGLPGAPGLPGQDGLPGLPGQKGESGFPGQPGL), 1210 to 1231 (PGFPGLKGEPGLPGLEGQPGPR), 1280 to 1296 (LPGLPGKDGLPGLPGLK), 1367 to 1386 (PAGLPGLPGLKGEPGLPGFP), 1462 to 1480 (LPGLDGLPGPSGPPGFAGA), and 1499 to 1510 (PGLPGFPGIEGI). Pro residues predominate over residues 1511-1528 (PGPPGLPGPSGPPGPPGP). In terms of domain architecture, Collagen IV NC1 spans 1533-1756 (GFLLVKHSQT…SRCQVCIRSP (224 aa)). 6 disulfide bridges follow: C1548–C1637, C1581–C1634, C1593–C1599, C1656–C1752, C1690–C1749, and C1702–C1709.

This sequence belongs to the type IV collagen family. In terms of assembly, trimers of two alpha 1(IV) and one alpha 2(IV) chain. Type IV collagen forms a mesh-like network linked through intermolecular interactions between 7S domains and between NC1 domains. Post-translationally, prolines at the third position of the tripeptide repeating unit (G-X-Y) are hydroxylated in some or all of the chains. In terms of processing, type IV collagens contain numerous cysteine residues which are involved in inter- and intramolecular disulfide bonding. 12 of these, located in the NC1 domain, are conserved in all known type IV collagens. The trimeric structure of the NC1 domains is stabilized by covalent bonds between Lys and Met residues.

The protein localises to the secreted. It localises to the extracellular space. Its subcellular location is the extracellular matrix. It is found in the basement membrane. In terms of biological role, collagen type IV is specific for basement membranes. In Ascaris suum (Pig roundworm), this protein is Collagen alpha-2(IV) chain.